The primary structure comprises 239 residues: Proteasome activator complex subunit 2 (239 aa).

A2 is modified (N-acetylalanine). S10 bears the Phosphoserine mark. The interval 65–86 (DIPIPDPPPKDDEMETDKQEKK) is disordered. Positions 72–86 (PPKDDEMETDKQEKK) are enriched in basic and acidic residues.

Belongs to the PA28 family. As to quaternary structure, heterodimer of PSME1 and PSME2, which forms a hexameric ring.

Its function is as follows. Implicated in immunoproteasome assembly and required for efficient antigen processing. The PA28 activator complex enhances the generation of class I binding peptides by altering the cleavage pattern of the proteasome. This Bos taurus (Bovine) protein is Proteasome activator complex subunit 2 (PSME2).